Consider the following 244-residue polypeptide: MGRGPSIEARKNASDSKRGKIFTKIIRQIGVAARAGGGDPSNNPSLRVVIDKALASNMSKDVIERAIKKAIGEMEGVQYEEVRYEGYAPGGVAVIVDCLTDNRLRTVSDVRHAFSKCGGNMGTEGSVAFMFKRLGVLSYAHAIADEERITEAAIDAGAEDVMVYIEDDEIEVITTPEAFSRVKEEMAALGLMPYHAEITFRADSDIVVDGDTAIQVRKLLDILEDLDDVQDVYSNVDQVTLGKR.

It belongs to the TACO1 family.

The protein resides in the cytoplasm. This is Probable transcriptional regulatory protein XfasM23_0940 from Xylella fastidiosa (strain M23).